We begin with the raw amino-acid sequence, 83 residues long: Acid shock protein (83 aa).

A signal peptide spans 1–21 (MKKVLALVVAAAMGLSSAAFA). Residues 22-40 (AETATPAKTATPAKTTQNT) are compositionally biased toward low complexity. The propeptide occupies 22-56 (AETATPAKTATPAKTTQNTQHHKKQHKKTVEQKAQ). The tract at residues 22–83 (AETATPAKTA…TSKTTSQPAA (62 aa)) is disordered. A compositionally biased stretch (basic residues) spans 57-70 (AAKKHQKKDGKKAP). Positions 71–83 (AKSTSKTTSQPAA) are enriched in low complexity.

This sequence belongs to the Asr family. Proteolytic processing gives rise to the active protein.

Its subcellular location is the periplasm. In terms of biological role, required for growth and/or survival at acidic conditions. The sequence is that of Acid shock protein from Salmonella heidelberg (strain SL476).